The following is a 527-amino-acid chain: Probable malate:quinone oxidoreductase (527 aa).

The protein belongs to the MQO family. FAD serves as cofactor.

It catalyses the reaction (S)-malate + a quinone = a quinol + oxaloacetate. Its pathway is carbohydrate metabolism; tricarboxylic acid cycle; oxaloacetate from (S)-malate (quinone route): step 1/1. This chain is Probable malate:quinone oxidoreductase, found in Pectobacterium atrosepticum (strain SCRI 1043 / ATCC BAA-672) (Erwinia carotovora subsp. atroseptica).